A 304-amino-acid polypeptide reads, in one-letter code: ATP phosphoribosyltransferase (304 aa).

It belongs to the ATP phosphoribosyltransferase family. Long subfamily. It depends on Mg(2+) as a cofactor.

It is found in the cytoplasm. The catalysed reaction is 1-(5-phospho-beta-D-ribosyl)-ATP + diphosphate = 5-phospho-alpha-D-ribose 1-diphosphate + ATP. The protein operates within amino-acid biosynthesis; L-histidine biosynthesis; L-histidine from 5-phospho-alpha-D-ribose 1-diphosphate: step 1/9. Feedback inhibited by histidine. Catalyzes the condensation of ATP and 5-phosphoribose 1-diphosphate to form N'-(5'-phosphoribosyl)-ATP (PR-ATP). Has a crucial role in the pathway because the rate of histidine biosynthesis seems to be controlled primarily by regulation of HisG enzymatic activity. The sequence is that of ATP phosphoribosyltransferase from Xanthomonas oryzae pv. oryzae (strain MAFF 311018).